The sequence spans 156 residues: Cytochrome c-type biogenesis protein CcmE 1 (156 aa).

Topologically, residues methionine 1 to arginine 8 are cytoplasmic. A helical; Signal-anchor for type II membrane protein membrane pass occupies residues leucine 9–alanine 29. The Periplasmic portion of the chain corresponds to leucine 30–arginine 156. Heme is bound by residues histidine 123 and tyrosine 127. The tract at residues alanine 137–arginine 156 is disordered. Residues proline 146 to arginine 156 show a composition bias toward low complexity.

It belongs to the CcmE/CycJ family.

Its subcellular location is the cell inner membrane. Functionally, heme chaperone required for the biogenesis of c-type cytochromes. Transiently binds heme delivered by CcmC and transfers the heme to apo-cytochromes in a process facilitated by CcmF and CcmH. The polypeptide is Cytochrome c-type biogenesis protein CcmE 1 (Xanthomonas euvesicatoria pv. vesicatoria (strain 85-10) (Xanthomonas campestris pv. vesicatoria)).